We begin with the raw amino-acid sequence, 465 residues long: GTPase Der (465 aa).

2 EngA-type G domains span residues 3–167 (PLVA…PEEG) and 179–352 (IRIA…ESAN). GTP contacts are provided by residues 9–16 (GRPNVGKS), 57–61 (DTGGI), 119–122 (NKID), 185–192 (GRPNVGKS), 232–236 (DTAGL), and 297–300 (NKWD). The KH-like domain maps to 353–437 (KTFTTSEVNK…PVSFIFREGT (85 aa)).

The protein belongs to the TRAFAC class TrmE-Era-EngA-EngB-Septin-like GTPase superfamily. EngA (Der) GTPase family. As to quaternary structure, associates with the 50S ribosomal subunit.

In terms of biological role, GTPase that plays an essential role in the late steps of ribosome biogenesis. The protein is GTPase Der of Stenotrophomonas maltophilia (strain K279a).